Reading from the N-terminus, the 460-residue chain is Hydroxymethylglutaryl-CoA synthase erg13B (460 aa).

E86 (proton donor/acceptor) is an active-site residue. C120 acts as the Acyl-thioester intermediate in catalysis. The (3S)-3-hydroxy-3-methylglutaryl-CoA site is built by C120, T162, S212, H263, K272, N340, and S374. The active-site Proton donor/acceptor is H263.

This sequence belongs to the thiolase-like superfamily. HMG-CoA synthase family.

The catalysed reaction is acetoacetyl-CoA + acetyl-CoA + H2O = (3S)-3-hydroxy-3-methylglutaryl-CoA + CoA + H(+). It functions in the pathway metabolic intermediate biosynthesis; (R)-mevalonate biosynthesis; (R)-mevalonate from acetyl-CoA: step 2/3. Its function is as follows. Hydroxymethylglutaryl-CoA synthase; part of the first module of ergosterol biosynthesis pathway that includes the early steps of the pathway, conserved across all eukaryotes, and which results in the formation of mevalonate from acetyl-coenzyme A (acetyl-CoA). Erg13A and erg13B condense acetyl-CoA with acetoacetyl-CoA to form hydroxymethylglutaryl-CoA (HMG-CoA). The first module starts with the action of the cytosolic acetyl-CoA acetyltransferase erg10B that catalyzes the formation of acetoacetyl-CoA. The hydroxymethylglutaryl-CoA synthases erg13A and erg13B then condense acetyl-CoA with acetoacetyl-CoA to form HMG-CoA. The rate-limiting step of the early module is the reduction to mevalonate by the 3-hydroxy-3-methylglutaryl-coenzyme A (HMG-CoA) reductases hmg1 and hmg2. Mevalonate is also a precursor for the extracellular siderophore triacetylfusarinine C (TAFC). This chain is Hydroxymethylglutaryl-CoA synthase erg13B, found in Aspergillus fumigatus (strain ATCC MYA-4609 / CBS 101355 / FGSC A1100 / Af293) (Neosartorya fumigata).